Here is a 687-residue protein sequence, read N- to C-terminus: UvrABC system protein C (687 aa).

The GIY-YIG domain occupies 16-95 (TEPGVYKFRD…IKKFDPHFNV (80 aa)). Positions 208 to 243 (DSVVRRLTNEMISASEALDFEKAARKRDDLNAVRKI) constitute a UVR domain.

This sequence belongs to the UvrC family. Interacts with UvrB in an incision complex.

The protein resides in the cytoplasm. Its function is as follows. The UvrABC repair system catalyzes the recognition and processing of DNA lesions. UvrC both incises the 5' and 3' sides of the lesion. The N-terminal half is responsible for the 3' incision and the C-terminal half is responsible for the 5' incision. This Corynebacterium diphtheriae (strain ATCC 700971 / NCTC 13129 / Biotype gravis) protein is UvrABC system protein C.